Reading from the N-terminus, the 52-residue chain is Metchnikowin (52 aa).

The first 24 residues, 1–24, serve as a signal peptide directing secretion; it reads MQLNLGAIFLALLGVMATATSVLA. A propeptide spanning residues 25-26 is cleaved from the precursor; sequence EP. Residues 28-52 form a disordered region; the sequence is RHQGPIFDTRPSPFNPNQPRPGPIY. The segment covering 40–52 has biased composition (pro residues); the sequence is PFNPNQPRPGPIY.

As to expression, hemolymph (at protein level). Highest expression in fat body.

It is found in the secreted. Potent antifungal and antibacterial activity against Gram-positive bacteria. In Drosophila melanogaster (Fruit fly), this protein is Metchnikowin (Mtk).